The chain runs to 542 residues: Putative DEAD-box ATP-dependent RNA helicase 43 (542 aa).

The Q motif signature appears at 97 to 125; it reads KNFMDMKFPSPLLRMLKDKGIMHPTPIQV. The region spanning 128–312 is the Helicase ATP-binding domain; sequence LPVVLSGRDM…TSALVKPVTV (185 aa). 141–148 is an ATP binding site; it reads AFTGSGKT. The short motif at 260-263 is the DEAD box element; that stretch reads DEAD. Residues 323–483 form the Helicase C-terminal domain; sequence DVIQEVEYVK…RIPPVLAELN (161 aa). A CCHC-type zinc finger spans residues 499–516; it reads KGCAYCGGLGHRILQCPK.

Belongs to the DEAD box helicase family. DDX41 subfamily.

The catalysed reaction is ATP + H2O = ADP + phosphate + H(+). This Arabidopsis thaliana (Mouse-ear cress) protein is Putative DEAD-box ATP-dependent RNA helicase 43 (RH43).